The sequence spans 786 residues: Receptor-like protein 30 (786 aa).

The signal sequence occupies residues 1 to 30; sequence MIPSQSNSFSGSVITLYFFLLGSLVLRTLA. Residues 31–739 are Extracellular-facing; it reads SSRLHYCRHD…SEPEEQVINW (709 aa). N-linked (GlcNAc...) asparagine glycans are attached at residues asparagine 67, asparagine 98, asparagine 115, and asparagine 133. 4 LRR repeats span residues 110–133, 134–158, 159–181, and 183–204; these read LQQLQNLTLSDCHLYGEVTSSLGN, LSRLTHLDLSSNQLTGEVLASVSKL, NQLRDLLLSENSFSGNIPTSFTN, and TKLSSLDISSNQFTLENFSFIL. Asparagine 181, asparagine 199, and asparagine 206 each carry an N-linked (GlcNAc...) asparagine glycan. 14 LRR repeats span residues 207 to 231, 233 to 255, 257 to 279, 280 to 304, 305 to 328, 329 to 352, 354 to 375, 376 to 399, 400 to 423, 425 to 447, 448 to 472, 474 to 496, 497 to 524, and 526 to 546; these read LTSLSSLNVASNHFKSTLPSDMSGL, NLKYFDVRENSFVGTFPTSLFTI, SLQIVYLEGNQFMGPIKFGNISS, SSRLWDLNLADNKFDGPIPEYISEI, HSLIVLDLSHNNLVGPIPTSISKL, VNLQHLSLSNNTLEGEVPGCLWGL, TVTLSHNSFNSFGKSSSGALDG, ESMQELDLGSNSLGGPFPHWICKQ, RFLKYLDLSNNLFNGSIPPCLKNS, YWLKGLVLRNNSFSGFLPDVFVN, ASMLLSLDVSYNRLEGKLPKSLINC, GMELLNVGSNIIKDTFPSWLVSL, PSLRVLILRSNAFYGSLYYDHISFGFQH, and RLIDISQNGFSGTLSPLYFSN. Residue asparagine 276 is glycosylated (N-linked (GlcNAc...) asparagine). An N-linked (GlcNAc...) asparagine glycan is attached at asparagine 338. N-linked (GlcNAc...) asparagine glycans are attached at residues asparagine 413, asparagine 422, asparagine 434, asparagine 447, and asparagine 471. The N-linked (GlcNAc...) asparagine glycan is linked to asparagine 558. LRR repeat units follow at residues 596–621, 622–645, 646–669, and 671–694; these read IPYFFRAIDFSGNRFFGNIPESVGLL, KELRLLNLSGNSFTSNIPQSLANL, TNLETLDLSRNQLSGHIPRDLGSL, and FLSTMNFSHNLLEGPVPLGTQFQS. 2 N-linked (GlcNAc...) asparagine glycosylation sites follow: asparagine 628 and asparagine 644. N-linked (GlcNAc...) asparagine glycosylation is present at asparagine 676. A helical transmembrane segment spans residues 740–760; that stretch reads IAAAIAYGPGVFCGLVIGHIF. Topologically, residues 761 to 786 are cytoplasmic; sequence FTAHKHEWFMEKFHRNKRRVVTTSAR.

It belongs to the RLP family.

The protein localises to the cell membrane. Receptor for microbe-associated molecular patterns (MAMPs) that induces a BAK1-dependent basal immune response to necrotrophic fungi (e.g. S.sclerotiorum) in the presence of MAMPs (e.g. flg22 and SCLEROTINIA CULTURE FILTRATE ELICITOR1 (SCFE1) from the necrotrophic fungal pathogen S.sclerotiorum). Functionality seems to depend on the presence of the receptor kinase SOBIR1 as an adapter protein. Required for full non-host resistance to bacterial pathogens (e.g. P.syringae pv phaseolicola). The chain is Receptor-like protein 30 from Arabidopsis thaliana (Mouse-ear cress).